The following is a 615-amino-acid chain: 1-deoxy-D-xylulose-5-phosphate synthase (615 aa).

Thiamine diphosphate contacts are provided by residues His-76 and 117–119; that span reads GHS. Asp-148 provides a ligand contact to Mg(2+). Residues 149-150, Asn-177, Tyr-284, and Glu-365 each bind thiamine diphosphate; that span reads GA. Asn-177 lines the Mg(2+) pocket.

It belongs to the transketolase family. DXPS subfamily. In terms of assembly, homodimer. Mg(2+) is required as a cofactor. Requires thiamine diphosphate as cofactor.

It catalyses the reaction D-glyceraldehyde 3-phosphate + pyruvate + H(+) = 1-deoxy-D-xylulose 5-phosphate + CO2. Its pathway is metabolic intermediate biosynthesis; 1-deoxy-D-xylulose 5-phosphate biosynthesis; 1-deoxy-D-xylulose 5-phosphate from D-glyceraldehyde 3-phosphate and pyruvate: step 1/1. In terms of biological role, catalyzes the acyloin condensation reaction between C atoms 2 and 3 of pyruvate and glyceraldehyde 3-phosphate to yield 1-deoxy-D-xylulose-5-phosphate (DXP). The polypeptide is 1-deoxy-D-xylulose-5-phosphate synthase (Francisella tularensis subsp. mediasiatica (strain FSC147)).